Here is an 87-residue protein sequence, read N- to C-terminus: U15-lycotoxin-Ls1h (87 aa).

The first 20 residues, 1-20 (MNSKIFAVLLLLGLLSCVLS), serve as a signal peptide directing secretion. Positions 21-66 (DQYCPKSSITACKKMNTRNDCCKDDDCTGGSWCCATPCGNFCKYPT) constitute a WAP domain. Cystine bridges form between Cys24/Cys54, Cys32/Cys58, Cys41/Cys53, Cys42/Cys80, and Cys47/Cys62.

This sequence belongs to the venom protein 11 family. 01 (wap-1) subfamily. Contains 5 disulfide bonds. As to expression, expressed by the venom gland.

The protein resides in the secreted. Functionally, has antibacterial activity. The protein is U15-lycotoxin-Ls1h of Lycosa singoriensis (Wolf spider).